A 274-amino-acid chain; its full sequence is Nitrogenase iron protein (274 aa).

8-15 (GKGGIGKS) contributes to the ATP binding site. Cys94 provides a ligand contact to [4Fe-4S] cluster. An ADP-ribosylarginine; by dinitrogenase reductase ADP-ribosyltransferase modification is found at Arg97. Cys131 provides a ligand contact to [4Fe-4S] cluster.

This sequence belongs to the NifH/BchL/ChlL family. Homodimer. It depends on [4Fe-4S] cluster as a cofactor. Post-translationally, the reversible ADP-ribosylation of Arg-97 inactivates the nitrogenase reductase and regulates nitrogenase activity.

It catalyses the reaction N2 + 8 reduced [2Fe-2S]-[ferredoxin] + 16 ATP + 16 H2O = H2 + 8 oxidized [2Fe-2S]-[ferredoxin] + 2 NH4(+) + 16 ADP + 16 phosphate + 6 H(+). Functionally, the key enzymatic reactions in nitrogen fixation are catalyzed by the nitrogenase complex, which has 2 components: the iron protein and the molybdenum-iron protein. This chain is Nitrogenase iron protein, found in Azobacteroides pseudotrichonymphae genomovar. CFP2.